The sequence spans 269 residues: Hydroxyethylthiazole kinase (269 aa).

Met42 provides a ligand contact to substrate. Residues Arg118 and Ser164 each contribute to the ATP site. Gly191 is a substrate binding site.

Belongs to the Thz kinase family. The cofactor is Mg(2+).

It catalyses the reaction 5-(2-hydroxyethyl)-4-methylthiazole + ATP = 4-methyl-5-(2-phosphooxyethyl)-thiazole + ADP + H(+). Its pathway is cofactor biosynthesis; thiamine diphosphate biosynthesis; 4-methyl-5-(2-phosphoethyl)-thiazole from 5-(2-hydroxyethyl)-4-methylthiazole: step 1/1. Functionally, catalyzes the phosphorylation of the hydroxyl group of 4-methyl-5-beta-hydroxyethylthiazole (THZ). The protein is Hydroxyethylthiazole kinase of Listeria welshimeri serovar 6b (strain ATCC 35897 / DSM 20650 / CCUG 15529 / CIP 8149 / NCTC 11857 / SLCC 5334 / V8).